The following is a 962-amino-acid chain: Protease 3 (962 aa).

The N-terminal stretch at Met1–Ala23 is a signal peptide. His88 provides a ligand contact to Zn(2+). Catalysis depends on Glu91, which acts as the Proton acceptor. Residues His92 and Glu169 each contribute to the Zn(2+) site.

This sequence belongs to the peptidase M16 family. Monomer. Requires Zn(2+) as cofactor.

Its subcellular location is the periplasm. It catalyses the reaction Preferential cleavage of 16-Tyr-|-Leu-17 and 25-Phe-|-Tyr-26 bonds of oxidized insulin B chain. Also acts on other substrates of Mw less than 7 kDa such as insulin and glucagon.. Its function is as follows. Endopeptidase that degrades small peptides of less than 7 kDa, such as glucagon and insulin. The polypeptide is Protease 3 (ptrA) (Salmonella typhi).